The chain runs to 303 residues: MSQAFTESVKTSLGPNATPRAKKLIASLVQHVHDFARENHLTTEDWLWGVDFINRIGQMSDSRRNEGILVCDIIGLETLVDALTNESEQSNHTSSAILGPFYLPDSPVYPNGGSIVQKAIPTDVKCFVRGKVTDTEGKPLGGAQLEVWQCNSAGFYSQQADHDGPEFNLRGTFITDDEGNYSFECLRPTSYPIPYDGPAGDLLKIMDRHPNRPSHIHWRVSHPGYHTLITQIYDAECPYTNNDSVYAVKDDIIVHFEKVDNKDKDLVGKVEYKLDYDISLATESSIQEARAAAKARQDAEIKL.

Residues Tyr-156, Tyr-191, His-215, and His-217 each contribute to the Fe cation site.

As to quaternary structure, homodimer. Fe(3+) serves as cofactor.

The catalysed reaction is catechol + O2 = cis,cis-muconate + 2 H(+). It functions in the pathway aromatic compound metabolism; beta-ketoadipate pathway; 5-oxo-4,5-dihydro-2-furylacetate from catechol: step 1/3. Its activity is regulated as follows. Inhibited by Ag(+), Cu(+), Hg(2+) and Pb(2+). Its function is as follows. Can cleave 4-methylcatechol at lower rates than catechol, but has no activity with 3-methylcatechol, 4-chlorocatechol, 4-carboxycatechol or hydroxyquinol. The polypeptide is Catechol 1,2-dioxygenase (HQD2) (Candida albicans (strain SC5314 / ATCC MYA-2876) (Yeast)).